A 757-amino-acid polypeptide reads, in one-letter code: MKLHSSSKIPNHAWLSDARMNNPSETSKSSESGDGNTGTQTNGLDFQKQAVPIGAITSAQAQALLGHLHQVQLAGTSLQAAAQSLNVQTKFKEEPGEPTQAVQPSQQPSLQAAIPQTQLMVAGGPITGLTLTPAQQQLLLQQAQAQLLAAAVQHSASQQHSAAGATISASAATPMTQIPLSQPIQIAQDLQQLQQLQQQNLNLQQFVLVHPTTNLPPAQFIISQTPQGQQGLLQAQNLLTQLPQQSQANLLQSQPSITLTSQPATPTRTIAATPVQQLPQSQTTPKRIDTPSLEEPSDLEELEQFAKTFKQRRIKLGFTQGDVGLAMGKLYGNDFSQTTISRFEALNLSFKNMCKLKPLLEKWLNDAENITSDSSLSNQSVLNSPGHGMEGLNRRRKKRTSIETNIRVALEKSFLENQKPTSEEITMIADQLNMEKEVIRVWFCNRRQKEKRINPPSSGGSSSSPIKSLFSSANPLVATTPSLVTSSTATTLTVNPVLPLTSAAAITSFPVPGTTGTSSANTATVISTAPPVSSVLTSPSLSPSPSATAATSEASTASGTSTTHTTSTPLTSPLSTGQVMVTASGIHTAATALQGAAQLPTSASLAAMAAAAGLNPGLMAPSQFAAGGALFSLNPGALGSALSPALMSNSTLATIQALASSGSLPITSLDATGNLVFANAGGTPNIVTAPLFLNPQNLSLLTSNPVSLVSAASTGVTGPITSLHATTSSVDSVQNTLFTVASASGAASTTTSASKAQ.

Disordered regions lie at residues 1–43 (MKLH…QTNG), 271–295 (AATP…SLEE), 375–398 (SLSN…RRKK), and 532–574 (VSSV…TSPL). Composition is skewed to polar residues over residues 19-43 (RMNN…QTNG) and 275-285 (VQQLPQSQTTP). The POU-specific domain maps to 294–368 (EEPSDLEELE…LLEKWLNDAE (75 aa)). Residues 395–454 (RRKKRTSIETNIRVALEKSFLENQKPTSEEITMIADQLNMEKEVIRVWFCNRRQKEKRIN) constitute a DNA-binding region (homeobox).

This sequence belongs to the POU transcription factor family. Class-2 subfamily.

Its subcellular location is the cytoplasm. The protein localises to the nucleus. Its function is as follows. Transcription factor that binds to the octamer motif (5'-ATTTGCAT-3') and activates the promoters of the genes for some small nuclear RNAs (snRNA) and histone H2B. Acts downstream of Notch signaling during radial glia formation. Regulates apoptosis, possibly via an FGF-signaling pathway. In Xenopus tropicalis (Western clawed frog), this protein is POU domain, class 2, transcription factor 1.